A 933-amino-acid polypeptide reads, in one-letter code: Phosphoenolpyruvate carboxylase (933 aa).

Residues H158 and K592 contribute to the active site.

This sequence belongs to the PEPCase type 1 family. The cofactor is Mg(2+).

The catalysed reaction is oxaloacetate + phosphate = phosphoenolpyruvate + hydrogencarbonate. Functionally, forms oxaloacetate, a four-carbon dicarboxylic acid source for the tricarboxylic acid cycle. This chain is Phosphoenolpyruvate carboxylase, found in Nitrosomonas eutropha (strain DSM 101675 / C91 / Nm57).